We begin with the raw amino-acid sequence, 113 residues long: Hydrogenase maturation factor HypA (113 aa).

Histidine 2 contacts Ni(2+). The Zn(2+) site is built by cysteine 73, cysteine 76, cysteine 89, and cysteine 92.

The protein belongs to the HypA/HybF family.

In terms of biological role, involved in the maturation of [NiFe] hydrogenases. Required for nickel insertion into the metal center of the hydrogenase. In Chlorobium phaeobacteroides (strain BS1), this protein is Hydrogenase maturation factor HypA.